Consider the following 179-residue polypeptide: Translationally-controlled tumor protein homolog (179 aa).

One can recognise a TCTP domain in the interval 1 to 179 (MIIYKDIISG…WKHGLEEMKV (179 aa)).

Belongs to the TCTP family.

The protein resides in the cytoplasm. It is found in the cytoskeleton. Functionally, involved in protein synthesis. Involved in microtubule stabilization. The sequence is that of Translationally-controlled tumor protein homolog from Aspergillus fumigatus (strain ATCC MYA-4609 / CBS 101355 / FGSC A1100 / Af293) (Neosartorya fumigata).